A 295-amino-acid chain; its full sequence is Phosphatidylserine decarboxylase proenzyme (295 aa).

Active-site charge relay system; for autoendoproteolytic cleavage activity residues include aspartate 90 and serine 258. Catalysis depends on serine 258, which acts as the Schiff-base intermediate with substrate; via pyruvic acid; for decarboxylase activity. A Pyruvic acid (Ser); by autocatalysis modification is found at serine 258.

The protein belongs to the phosphatidylserine decarboxylase family. PSD-B subfamily. Prokaryotic type I sub-subfamily. As to quaternary structure, heterodimer of a large membrane-associated beta subunit and a small pyruvoyl-containing alpha subunit. Pyruvate serves as cofactor. Is synthesized initially as an inactive proenzyme. Formation of the active enzyme involves a self-maturation process in which the active site pyruvoyl group is generated from an internal serine residue via an autocatalytic post-translational modification. Two non-identical subunits are generated from the proenzyme in this reaction, and the pyruvate is formed at the N-terminus of the alpha chain, which is derived from the carboxyl end of the proenzyme. The autoendoproteolytic cleavage occurs by a canonical serine protease mechanism, in which the side chain hydroxyl group of the serine supplies its oxygen atom to form the C-terminus of the beta chain, while the remainder of the serine residue undergoes an oxidative deamination to produce ammonia and the pyruvoyl prosthetic group on the alpha chain. During this reaction, the Ser that is part of the protease active site of the proenzyme becomes the pyruvoyl prosthetic group, which constitutes an essential element of the active site of the mature decarboxylase.

It is found in the cell membrane. It catalyses the reaction a 1,2-diacyl-sn-glycero-3-phospho-L-serine + H(+) = a 1,2-diacyl-sn-glycero-3-phosphoethanolamine + CO2. The protein operates within phospholipid metabolism; phosphatidylethanolamine biosynthesis; phosphatidylethanolamine from CDP-diacylglycerol: step 2/2. Catalyzes the formation of phosphatidylethanolamine (PtdEtn) from phosphatidylserine (PtdSer). The polypeptide is Phosphatidylserine decarboxylase proenzyme (Blochmanniella pennsylvanica (strain BPEN)).